The primary structure comprises 273 residues: 4-hydroxy-tetrahydrodipicolinate reductase (273 aa).

Residues 8–13, glutamate 34, 102–104, and 128–131 each bind NAD(+); these read GACGRM, GTT, and APNM. Residue histidine 160 is the Proton donor/acceptor of the active site. Histidine 161 provides a ligand contact to (S)-2,3,4,5-tetrahydrodipicolinate. The Proton donor role is filled by lysine 164. 170 to 171 contacts (S)-2,3,4,5-tetrahydrodipicolinate; it reads GT.

Belongs to the DapB family.

Its subcellular location is the cytoplasm. The catalysed reaction is (S)-2,3,4,5-tetrahydrodipicolinate + NAD(+) + H2O = (2S,4S)-4-hydroxy-2,3,4,5-tetrahydrodipicolinate + NADH + H(+). The enzyme catalyses (S)-2,3,4,5-tetrahydrodipicolinate + NADP(+) + H2O = (2S,4S)-4-hydroxy-2,3,4,5-tetrahydrodipicolinate + NADPH + H(+). The protein operates within amino-acid biosynthesis; L-lysine biosynthesis via DAP pathway; (S)-tetrahydrodipicolinate from L-aspartate: step 4/4. Its function is as follows. Catalyzes the conversion of 4-hydroxy-tetrahydrodipicolinate (HTPA) to tetrahydrodipicolinate. This is 4-hydroxy-tetrahydrodipicolinate reductase from Methanothermobacter thermautotrophicus (strain ATCC 29096 / DSM 1053 / JCM 10044 / NBRC 100330 / Delta H) (Methanobacterium thermoautotrophicum).